Reading from the N-terminus, the 460-residue chain is Arginine decarboxylase (460 aa).

An N6-(pyridoxal phosphate)lysine modification is found at K226.

The protein belongs to the Orn/Lys/Arg decarboxylase class-I family. Pyridoxal 5'-phosphate serves as cofactor.

It localises to the cytoplasm. The enzyme catalyses L-arginine + H(+) = agmatine + CO2. It functions in the pathway amine and polyamine biosynthesis; agmatine biosynthesis; agmatine from L-arginine: step 1/1. Catalyzes the formation of agmatine from arginine. This chain is Arginine decarboxylase (speA), found in Bacillus cereus (strain ATCC 14579 / DSM 31 / CCUG 7414 / JCM 2152 / NBRC 15305 / NCIMB 9373 / NCTC 2599 / NRRL B-3711).